The sequence spans 1166 residues: Folliculin-interacting protein 1 (1166 aa).

Residues 37 to 478 (FDPSQIRLIV…TVMPNGQPPI (442 aa)) form the uDENN FNIP1/2-type domain. Ser-220, Ser-230, Ser-232, and Ser-261 each carry phosphoserine; by AMPK. At Thr-294 the chain carries Phosphothreonine. The residue at position 296 (Ser-296) is a Phosphoserine. The cDENN FNIP1/2-type domain occupies 486-1092 (SSQSVDMLAK…VSNLLHSTLQ (607 aa)). Ser-593 is modified (phosphoserine; by AMPK). Ser-594 carries the phosphoserine modification. Positions 608 and 610 each coordinate Zn(2+). Residues 608–615 (CNCKYCSH) carry the Cys degron motif. The segment at 611-612 (KY) is KY-finger. 2 residues coordinate Zn(2+): Cys-613 and His-615. 2 positions are modified to phosphoserine: Ser-760 and Ser-763. 2 disordered regions span residues 781–817 (TKPL…VSEE) and 912–956 (LVPH…HDMT). 2 stretches are compositionally biased toward basic and acidic residues: residues 783–805 (PLKE…KDQS) and 915–925 (HGDKESSDKKI). The interval 929-1166 (TEWDIPRNES…HSPYVAQILL (238 aa)) is interaction with HSP90AA1. Ser-938 is modified (phosphoserine; alternate; by CK2). The O-linked (GlcNAc) serine; alternate glycan is linked to Ser-938. 4 positions are modified to phosphoserine; by CK2: Ser-939, Ser-941, Ser-946, and Ser-948. The region spanning 1102–1157 (FCVMHLEDRLQELYFKSKMLSEYLRGQMRVHVKELGVVLGIESSDLPLLAAVASTH) is the dDENN FNIP1/2-type domain. Lys-1119 participates in a covalent cross-link: Glycyl lysine isopeptide (Lys-Gly) (interchain with G-Cter in ubiquitin).

Belongs to the FNIP family. In terms of assembly, homodimer and homomultimer. Heterodimer and heteromultimer with FNIP2. Interacts with FLCN (via C-terminus). Component of the lysosomal folliculin complex (LFC), composed of FLCN, FNIP1 (or FNIP2), RagA/RRAGA or RagB/RRAGB GDP-bound, RagC/RRAGC or RagD/RRAGD GTP-bound, and Ragulator. Interacts with HSPCA and with the PRKAA1, PRKAB1 and PRKAG1 subunits of 5'-AMP-activated protein kinase (AMPK). Phosphorylated FLCN and AMPK are preferentially bound. Interacts with HSP70, STIP1, PTGES3, CDC37, BRAF, GCR and CDK4. Interacts with HSP90AA1; the interaction inhibits HSP90AA1 ATPase activity. Interacts with ATP2A2. In terms of processing, phosphorylated by AMPK in response to energetic stress. Phosphorylation by AMPK in response to mitochondrial damage promotes inactivation of the non-canonical mTORC1 signaling, nuclear translocation of TFEB and TFE3, inducing transcription of lysosomal or autophagy genes. Sequential phosphorylation by CK2 promotes its gradual interaction with HSP90AA1/Hsp90. Priming phosphorylation at Ser-938 is followed by relay phosphorylation at Ser-939, Ser-941, Ser-946 and Ser-948, promoting its gradual interaction with HSP90AA1/Hsp90. This leads to incremental inhibition of HSP90AA1/Hsp90 ATPase activity and gradual activation of both kinase and non-kinase clients. Dephosphorylated by protein phosphatase 5 (PP5), promoting glycosylation by OGT. Post-translationally, glcNAcylation at Ser-938 by OGT following dephosphorylation by protein phosphatase 5 (PP5) promotes ubiquitination and degradation by the proteasome. Ubiquitinated through 'Lys-11' linkage of ubiquitin moieties at Lys-1119 following glycosylation by OGT, leading to its degradation by the proteasome. Ubiquitinated by the CRL2(FEM1B) complex in response to reductive stress: reductive stress causes reduction of the conserved Cys degron in FNIP1, followed by zinc-binding, zinc acting as a molecular glue for recognition by the CRL2(FEM1B) complex. Ubiquitination leads to FNIP1 degradation, and activation of mitochondria to recalibrate reactive oxygen species (ROS). In terms of processing, oxidation of the Cys degron in normal conditions promotes its stabilization by preventing recognition and ubiquitination by the CRL2(FEM1B) complex. As to expression, strong expression is found in the heart, liver placenta, muscle, nasal mucosa, salivary gland and uvula and moderate expression in kidney and lung. Higher levels detected in clear cell renal cell carcinoma (RCC) and chromophobe RCC than in normal kidney tissue. Expressed in peripheral blood mononuclear cells.

It localises to the lysosome membrane. The protein resides in the cytoplasm. It is found in the cytosol. Binding partner of the GTPase-activating protein FLCN: involved in the cellular response to amino acid availability by regulating the non-canonical mTORC1 signaling cascade controlling the MiT/TFE factors TFEB and TFE3. Required to promote FLCN recruitment to lysosomes and interaction with Rag GTPases, leading to activation of the non-canonical mTORC1 signaling. In low-amino acid conditions, component of the lysosomal folliculin complex (LFC) on the membrane of lysosomes, which inhibits the GTPase-activating activity of FLCN, thereby inactivating mTORC1 and promoting nuclear translocation of TFEB and TFE3. Upon amino acid restimulation, disassembly of the LFC complex liberates the GTPase-activating activity of FLCN, leading to activation of mTORC1 and subsequent inactivation of TFEB and TFE3. Together with FLCN, regulates autophagy: following phosphorylation by ULK1, interacts with GABARAP and promotes autophagy. In addition to its role in mTORC1 signaling, also acts as a co-chaperone of HSP90AA1/Hsp90: following gradual phosphorylation by CK2, inhibits the ATPase activity of HSP90AA1/Hsp90, leading to activate both kinase and non-kinase client proteins of HSP90AA1/Hsp90. Acts as a scaffold to load client protein FLCN onto HSP90AA1/Hsp90. Competes with the activating co-chaperone AHSA1 for binding to HSP90AA1, thereby providing a reciprocal regulatory mechanism for chaperoning of client proteins. Also acts as a core component of the reductive stress response by inhibiting activation of mitochondria in normal conditions: in response to reductive stress, the conserved Cys degron is reduced, leading to recognition and polyubiquitylation by the CRL2(FEM1B) complex, followed by proteasomal. Required for B-cell development. The polypeptide is Folliculin-interacting protein 1 (Homo sapiens (Human)).